A 100-amino-acid chain; its full sequence is Putative sodium channel toxin Ts26 (100 aa).

Residues 1-22 (MVKSAMKIVILILFVLLIRVES) form the signal peptide. Residues 24-92 (RNGYPDISDG…VMDTTIEYCE (69 aa)) form the LCN-type CS-alpha/beta domain. Cystine bridges form between C38-C64, C50-C69, C54-C71, and C65-C91.

Belongs to the long (4 C-C) scorpion toxin superfamily. Sodium channel inhibitor family. As to expression, expressed by the venom gland.

It localises to the secreted. Functionally, putative sodium channel toxin. The polypeptide is Putative sodium channel toxin Ts26 (Tityus serrulatus (Brazilian scorpion)).